The chain runs to 748 residues: tRNA endonuclease ANKZF1 (748 aa).

Residues 96–120 (LFCSACDQIFQNHQEQREHYKLDWH) form a C2H2-type zinc finger. The tract at residues 135–185 (SASDFEQQSSTGDLSSISGSDDTDSSSEEDLLPLDEGRAESEKPNRPPGFY) is disordered. The span at 143–154 (SSTGDLSSISGS) shows a compositional bias: low complexity. Positions 155 to 167 (DDTDSSSEEDLLP) are enriched in acidic residues. Residues 169-179 (DEGRAESEKPN) show a composition bias toward basic and acidic residues. Residues 227–370 (GPRYYVVLMA…QRVLHKLTTL (144 aa)) form the VLRF1 domain. Q270 is a catalytic residue. Phosphoserine occurs at positions 282 and 385. Basic and acidic residues predominate over residues 383–408 (FHSPETHWKPVREERKKDTEKEKTKV). 2 disordered regions span residues 383-438 (FHSP…SEVE) and 460-497 (RRRR…TQEV). The segment covering 429-438 (SQEEDGSEVE) has biased composition (acidic residues). The span at 484-497 (QPQDEPFSQPTQEV) shows a compositional bias: polar residues. Residues 515-545 (ELWDTLLAACRAGEVEVLKLQLATGLVDPGV) form an ANK 1 repeat. S555 bears the Phosphoserine mark. Residues 556–585 (GGFTLLHAAAAAGRGLVVRLLLEAGADPTV) form an ANK 2 repeat. A disordered region spans residues 621-677 (KARVPGPLTQEMEARQATRKKEQKAARRQREQQQRKQREQEEQEQEEQRRFAALSDR). The stretch at 628–681 (LTQEMEARQATRKKEQKAARRQREQQQRKQREQEEQEQEEQRRFAALSDREKRA) forms a coiled coil. Residue T629 is modified to Phosphothreonine. A compositionally biased stretch (basic and acidic residues) spans 632–677 (MEARQATRKKEQKAARRQREQQQRKQREQEEQEQEEQRRFAALSDR). Residues 654-666 (QRKQREQEEQEQE) are VCP/p97-interacting motif (VIM). S702 bears the Phosphoserine mark.

This sequence belongs to the ANKZF1/VMS1 family. In terms of assembly, interacts (via VIM motif) with VCP.

It localises to the cytoplasm. In terms of biological role, endonuclease that cleaves polypeptidyl-tRNAs downstream of the ribosome-associated quality control (RQC) pathway to release incompletely synthesized polypeptides for degradation. The RQC pathway disassembles aberrantly stalled translation complexes to recycle or degrade the constituent parts. ANKZF1 acts downstream disassembly of stalled ribosomes and specifically cleaves off the terminal 3'-CCA nucleotides universal to all tRNAs from polypeptidyl-tRNAs, releasing (1) ubiquitinated polypeptides from 60S ribosomal subunit for degradation and (2) cleaved tRNAs. ANKZF1-cleaved tRNAs are then repaired and recycled by ELAC1 and TRNT1. Also plays a role in the cellular response to hydrogen peroxide and in the maintenance of mitochondrial integrity under conditions of cellular stress. The polypeptide is tRNA endonuclease ANKZF1 (Mus musculus (Mouse)).